A 159-amino-acid chain; its full sequence is Ribosomal RNA large subunit methyltransferase H (159 aa).

Residues leucine 76, glycine 108, and 127 to 132 (FGLLTL) contribute to the S-adenosyl-L-methionine site.

The protein belongs to the RNA methyltransferase RlmH family. As to quaternary structure, homodimer.

The protein localises to the cytoplasm. The catalysed reaction is pseudouridine(1915) in 23S rRNA + S-adenosyl-L-methionine = N(3)-methylpseudouridine(1915) in 23S rRNA + S-adenosyl-L-homocysteine + H(+). Specifically methylates the pseudouridine at position 1915 (m3Psi1915) in 23S rRNA. The polypeptide is Ribosomal RNA large subunit methyltransferase H (Streptococcus mutans serotype c (strain ATCC 700610 / UA159)).